Consider the following 199-residue polypeptide: Recombination protein RecR (199 aa).

The C4-type zinc-finger motif lies at 58-73 (CSTCNNLTDKDPCTIC). The Toprim domain occupies 81–176 (NLICVVQDAR…RVTRLAYGLP (96 aa)).

Belongs to the RecR family.

May play a role in DNA repair. It seems to be involved in an RecBC-independent recombinational process of DNA repair. It may act with RecF and RecO. This is Recombination protein RecR from Natranaerobius thermophilus (strain ATCC BAA-1301 / DSM 18059 / JW/NM-WN-LF).